The following is a 231-amino-acid chain: 7-cyano-7-deazaguanine synthase (231 aa).

Residue 8-18 (FSGGQDSTTCL) participates in ATP binding. Residues Cys188, Cys197, Cys200, and Cys203 each contribute to the Zn(2+) site.

It belongs to the QueC family. Zn(2+) is required as a cofactor.

The catalysed reaction is 7-carboxy-7-deazaguanine + NH4(+) + ATP = 7-cyano-7-deazaguanine + ADP + phosphate + H2O + H(+). Its pathway is purine metabolism; 7-cyano-7-deazaguanine biosynthesis. In terms of biological role, catalyzes the ATP-dependent conversion of 7-carboxy-7-deazaguanine (CDG) to 7-cyano-7-deazaguanine (preQ(0)). The protein is 7-cyano-7-deazaguanine synthase of Salmonella gallinarum (strain 287/91 / NCTC 13346).